A 348-amino-acid polypeptide reads, in one-letter code: Lysophosphatidic acid receptor 2 (348 aa).

Residues 1–30 (MGQCYYNETIGFFYNNSGKELSSHWRPKDV) lie on the Extracellular side of the membrane. Residues N7 and N15 are each glycosylated (N-linked (GlcNAc...) asparagine). The chain crosses the membrane as a helical span at residues 31-51 (VVVALGLTVSVLVLLTNLLVI). Over 52-66 (AAIASNRRFHQPIYY) the chain is Cytoplasmic. The chain crosses the membrane as a helical span at residues 67–87 (LLGNLAAADLFAGVAYLFLMF). Residues 88 to 100 (HTGPRTARLSLEG) lie on the Extracellular side of the membrane. Residues 101–123 (WFLRQGLLDTSLTASVATLLAIA) form a helical membrane-spanning segment. The Cytoplasmic segment spans residues 124 to 143 (VERHRSVMAVQLHSRLPRGR). A helical membrane pass occupies residues 144-164 (VVMLIVGVWVAALGLGLLPAH). Residues 165-185 (SWHCLCALDRCSRMAPLLSRS) are Extracellular-facing. A helical transmembrane segment spans residues 186–206 (YLAVWALSSLLVFLLMVAVYT). At 207–239 (RIFFYVRRRVQRMAEHVSCHPRYRETTLSLVKT) the chain is on the cytoplasmic side. A helical transmembrane segment spans residues 240–260 (VVIILGAFVVCWTPGQVVLLL). Residues 261-276 (DGLGCESCNVLAVEKY) are Extracellular-facing. Residues 277–294 (FLLLAEANSLVNAAVYSC) form a helical membrane-spanning segment. Residues 295–348 (RDAEMRRTFRRLLCCACLRQSTRESVHYTSSAQGGASTRIMLPENGHPLMDSTL) lie on the Cytoplasmic side of the membrane. C308 carries S-palmitoyl cysteine lipidation. The PDZ-binding signature appears at 345–348 (DSTL).

Belongs to the G-protein coupled receptor 1 family. In terms of assembly, interacts with SLC9A3R2/NHERF2, MAGI3 and PLCB3. Interacts with RALA and GRK2. As to expression, expressed most abundantly in testes and peripheral blood leukocytes with less expression in pancreas, spleen, thymus and prostate. Little or no expression in heart, brain, placenta, lung, liver, skeletal muscle, kidney, ovary, small intestine, or colon.

It is found in the cell surface. It localises to the cell membrane. Functionally, receptor for lysophosphatidic acid (LPA), a mediator of diverse cellular activities. Seems to be coupled to the G(i)/G(o), G(12)/G(13), and G(q) families of heteromeric G proteins. Plays a key role in phospholipase C-beta (PLC-beta) signaling pathway. Stimulates phospholipase C (PLC) activity in a manner that is independent of RALA activation. The chain is Lysophosphatidic acid receptor 2 from Homo sapiens (Human).